We begin with the raw amino-acid sequence, 418 residues long: MSLSTVSNHIINPLGNVVYGNPSSPTSTSSSSSLTPTSTNEEMIKKEDSGTSEPSSPSTGECNGKKAGRRKIKIEFIDDKSRRHITFSKRKAGIMKKAYELSTLTGTQVLLLVASETGHVYTFATAKLQPLITRPEGKNLIQSCLNTPDNPNSPSMANQNSNNNSNLLQQQQQQQLQQQQQLQQQQQQQQQQQQQQQQQQQQQQAAQQAVQQQQQQQAAQQQAAQQQQLQLQQQQQQQQQQQQQQQQQQQQQQLQQLQQQQLLQQQQHQQIQQHQQQQQYINSNGYPETIYDIQDKDIERRLGKDNNNNNNNNNNNINNNNNNNNSNNNSGNNNSNNNNNNNNKNNSNNNSQYIQQQNLNIDLNYSNPNVYPIGNYFQQTVQSRYIQSSSSASSSPASPNQFNYSNHSMPLNNQFPPC.

4 disordered regions span residues leucine 14–alanine 67, cysteine 144–glutamine 170, arginine 301–serine 351, and serine 388–cysteine 418. Low complexity-rich tracts occupy residues proline 22–threonine 39 and threonine 51–glutamate 61. Positions alanine 67–lysine 127 constitute an MADS-box domain. 3 stretches are compositionally biased toward low complexity: residues asparagine 150–glutamine 170, asparagine 306–serine 351, and serine 388–proline 399. The segment covering asparagine 400–cysteine 418 has biased composition (polar residues).

It localises to the nucleus. Its function is as follows. Required for proper slug migration, spore differentiation and stalk differentiation (under nonbuffered conditions). Could be involved in late events of spore maturation necessary for spore stability. The chain is Serum response factor homolog A (srfA) from Dictyostelium discoideum (Social amoeba).